The primary structure comprises 98 residues: NADH-ubiquinone oxidoreductase chain 4L (98 aa).

3 consecutive transmembrane segments (helical) span residues 2-22 (PSIF…MLIF), 37-57 (MLSM…TMSF), and 61-81 (ILLL…LVTV).

Belongs to the complex I subunit 4L family. In terms of assembly, core subunit of respiratory chain NADH dehydrogenase (Complex I) which is composed of 45 different subunits.

The protein resides in the mitochondrion inner membrane. It carries out the reaction a ubiquinone + NADH + 5 H(+)(in) = a ubiquinol + NAD(+) + 4 H(+)(out). Functionally, core subunit of the mitochondrial membrane respiratory chain NADH dehydrogenase (Complex I) which catalyzes electron transfer from NADH through the respiratory chain, using ubiquinone as an electron acceptor. Part of the enzyme membrane arm which is embedded in the lipid bilayer and involved in proton translocation. In Varecia rubra (Red ruffed lemur), this protein is NADH-ubiquinone oxidoreductase chain 4L (MT-ND4L).